The chain runs to 285 residues: Pantothenate synthetase (285 aa).

30–37 (MGNLHDGH) lines the ATP pocket. Catalysis depends on His-37, which acts as the Proton donor. Gln-61 is a (R)-pantoate binding site. Gln-61 serves as a coordination point for beta-alanine. 148 to 151 (GEKD) is a binding site for ATP. Gln-154 serves as a coordination point for (R)-pantoate. Residue 185 to 188 (RSSR) coordinates ATP.

It belongs to the pantothenate synthetase family. In terms of assembly, homodimer.

It is found in the cytoplasm. The catalysed reaction is (R)-pantoate + beta-alanine + ATP = (R)-pantothenate + AMP + diphosphate + H(+). It participates in cofactor biosynthesis; (R)-pantothenate biosynthesis; (R)-pantothenate from (R)-pantoate and beta-alanine: step 1/1. In terms of biological role, catalyzes the condensation of pantoate with beta-alanine in an ATP-dependent reaction via a pantoyl-adenylate intermediate. This is Pantothenate synthetase from Alcanivorax borkumensis (strain ATCC 700651 / DSM 11573 / NCIMB 13689 / SK2).